The primary structure comprises 77 residues: Large ribosomal subunit protein bL28 (77 aa).

This sequence belongs to the bacterial ribosomal protein bL28 family.

The protein is Large ribosomal subunit protein bL28 of Variovorax paradoxus (strain S110).